A 334-amino-acid chain; its full sequence is Trans-O-hydroxybenzylidenepyruvate hydratase-aldolase (334 aa).

It belongs to the DapA family.

It carries out the reaction (3E)-4-(2-hydroxyphenyl)-2-oxobut-3-enoate + H2O = salicylaldehyde + pyruvate. Its pathway is aromatic compound metabolism; naphthalene degradation. Its function is as follows. Involved in the naphthalene upper catabolic pathway. Catalyzes the transformation of trans-O-hydroxybenzylidenepyruvate (THBPA) to salicylaldehyde and pyruvate. The reaction is reversible. This Pseudomonas aeruginosa protein is Trans-O-hydroxybenzylidenepyruvate hydratase-aldolase (pahE).